Here is a 316-residue protein sequence, read N- to C-terminus: tRNA-dihydrouridine(16) synthase (316 aa).

FMN-binding positions include 7–9 (PME) and Gln-68. The active-site Proton donor is Cys-98. FMN-binding positions include Lys-139, 200–202 (NGE), and 224–225 (GR).

Belongs to the Dus family. DusC subfamily. FMN serves as cofactor.

The enzyme catalyses 5,6-dihydrouridine(16) in tRNA + NADP(+) = uridine(16) in tRNA + NADPH + H(+). It catalyses the reaction 5,6-dihydrouridine(16) in tRNA + NAD(+) = uridine(16) in tRNA + NADH + H(+). Functionally, catalyzes the synthesis of 5,6-dihydrouridine (D), a modified base found in the D-loop of most tRNAs, via the reduction of the C5-C6 double bond in target uridines. Specifically modifies U16 in tRNAs. In Escherichia coli O157:H7, this protein is tRNA-dihydrouridine(16) synthase.